The sequence spans 212 residues: Cyclin-P4-1 (212 aa).

The protein belongs to the cyclin family. Cyclin U/P subfamily.

The polypeptide is Cyclin-P4-1 (CYCP4-1) (Oryza sativa subsp. japonica (Rice)).